Reading from the N-terminus, the 1023-residue chain is FHIP family protein AGAP011705 (1023 aa).

3 stretches are compositionally biased toward polar residues: residues 1 to 13 (MSWL…RQSF), 806 to 825 (SMTS…SSSY), and 868 to 888 (GLNH…ASMN). 2 disordered regions span residues 1 to 39 (MSWL…AGGG) and 797 to 927 (GKLL…AETQ). Positions 889–906 (VPSPVGQQQHQHQSVSSV) are enriched in low complexity.

It belongs to the FHIP family.

This is FHIP family protein AGAP011705 from Anopheles gambiae (African malaria mosquito).